Consider the following 151-residue polypeptide: Ribosomal RNA large subunit methyltransferase H (151 aa).

Residues Gly100 and Leu119–Phe124 each bind S-adenosyl-L-methionine.

Belongs to the RNA methyltransferase RlmH family. In terms of assembly, homodimer.

The protein localises to the cytoplasm. It catalyses the reaction pseudouridine(1915) in 23S rRNA + S-adenosyl-L-methionine = N(3)-methylpseudouridine(1915) in 23S rRNA + S-adenosyl-L-homocysteine + H(+). Specifically methylates the pseudouridine at position 1915 (m3Psi1915) in 23S rRNA. This chain is Ribosomal RNA large subunit methyltransferase H, found in Thermotoga maritima (strain ATCC 43589 / DSM 3109 / JCM 10099 / NBRC 100826 / MSB8).